Consider the following 1409-residue polypeptide: Mediator of RNA polymerase II transcription subunit 23 (1409 aa).

Residues 1359 to 1409 are disordered; the sequence is ASAAGQGPAQGGPQSQQPQTTGQAGGQPSVPQQQQQTQQQQPQQQQQVQQQ.

The protein belongs to the Mediator complex subunit 23 family. Component of the Mediator complex.

It localises to the nucleus. Functionally, component of the Mediator complex, a coactivator involved in the regulated transcription of nearly all RNA polymerase II-dependent genes. Mediator functions as a bridge to convey information from gene-specific regulatory proteins to the basal RNA polymerase II transcription machinery. Mediator is recruited to promoters by direct interactions with regulatory proteins and serves as a scaffold for the assembly of a functional preinitiation complex with RNA polymerase II and the general transcription factors. In Aedes aegypti (Yellowfever mosquito), this protein is Mediator of RNA polymerase II transcription subunit 23 (MED23).